The following is a 248-amino-acid chain: Ubiquinone biosynthesis O-methyltransferase (248 aa).

Positions 41, 72, 93, and 136 each coordinate S-adenosyl-L-methionine.

Belongs to the methyltransferase superfamily. UbiG/COQ3 family.

It catalyses the reaction a 3-demethylubiquinol + S-adenosyl-L-methionine = a ubiquinol + S-adenosyl-L-homocysteine + H(+). The catalysed reaction is a 3-(all-trans-polyprenyl)benzene-1,2-diol + S-adenosyl-L-methionine = a 2-methoxy-6-(all-trans-polyprenyl)phenol + S-adenosyl-L-homocysteine + H(+). It participates in cofactor biosynthesis; ubiquinone biosynthesis. In terms of biological role, O-methyltransferase that catalyzes the 2 O-methylation steps in the ubiquinone biosynthetic pathway. The protein is Ubiquinone biosynthesis O-methyltransferase of Rhizobium johnstonii (strain DSM 114642 / LMG 32736 / 3841) (Rhizobium leguminosarum bv. viciae).